Reading from the N-terminus, the 65-residue chain is UPF0434 protein BRADO0313 (65 aa).

Belongs to the UPF0434 family.

The polypeptide is UPF0434 protein BRADO0313 (Bradyrhizobium sp. (strain ORS 278)).